The primary structure comprises 109 residues: Thiosulfate sulfurtransferase GlpE (109 aa).

Positions 16–104 (RNAGAVIVDI…WRHTYPSDVE (89 aa)) constitute a Rhodanese domain. The active-site Cysteine persulfide intermediate is the cysteine 64.

This sequence belongs to the GlpE family.

Its subcellular location is the cytoplasm. It catalyses the reaction thiosulfate + hydrogen cyanide = thiocyanate + sulfite + 2 H(+). The catalysed reaction is thiosulfate + [thioredoxin]-dithiol = [thioredoxin]-disulfide + hydrogen sulfide + sulfite + 2 H(+). Transferase that catalyzes the transfer of sulfur from thiosulfate to thiophilic acceptors such as cyanide or dithiols. May function in a CysM-independent thiosulfate assimilation pathway by catalyzing the conversion of thiosulfate to sulfite, which can then be used for L-cysteine biosynthesis. The chain is Thiosulfate sulfurtransferase GlpE from Stutzerimonas stutzeri (strain A1501) (Pseudomonas stutzeri).